Here is a 533-residue protein sequence, read N- to C-terminus: D-3-phosphoglycerate dehydrogenase (533 aa).

Ala-2 is modified (N-acetylalanine). Residue Ser-14 is modified to Phosphoserine. The residue at position 21 (Lys-21) is an N6-acetyllysine; alternate. Lys-21 is covalently cross-linked (Glycyl lysine isopeptide (Lys-Gly) (interchain with G-Cter in SUMO1); alternate). Lys-21 participates in a covalent cross-link: Glycyl lysine isopeptide (Lys-Gly) (interchain with G-Cter in SUMO2); alternate. At Lys-58 the chain carries N6-acetyllysine. NAD(+) contacts are provided by residues Thr-78, 155–156, Asp-175, Thr-207, 234–236, and Asp-260; these read RI and CAR. Phosphothreonine is present on Thr-78. The active site involves Arg-236. The active site involves Glu-265. His-283 functions as the Proton donor in the catalytic mechanism. Position 283–286 (283–286) interacts with NAD(+); that stretch reads HLGA.

This sequence belongs to the D-isomer specific 2-hydroxyacid dehydrogenase family. In terms of assembly, homotetramer.

It catalyses the reaction (2R)-3-phosphoglycerate + NAD(+) = 3-phosphooxypyruvate + NADH + H(+). The enzyme catalyses (R)-2-hydroxyglutarate + NAD(+) = 2-oxoglutarate + NADH + H(+). It carries out the reaction (S)-malate + NAD(+) = oxaloacetate + NADH + H(+). It participates in amino-acid biosynthesis; L-serine biosynthesis; L-serine from 3-phospho-D-glycerate: step 1/3. Catalyzes the reversible oxidation of 3-phospho-D-glycerate to 3-phosphonooxypyruvate, the first step of the phosphorylated L-serine biosynthesis pathway. Also catalyzes the reversible oxidation of 2-hydroxyglutarate to 2-oxoglutarate and the reversible oxidation of (S)-malate to oxaloacetate. This Pongo abelii (Sumatran orangutan) protein is D-3-phosphoglycerate dehydrogenase (PHGDH).